The chain runs to 360 residues: Protein Wnt-2 (360 aa).

A signal peptide spans 1-25 (MNACLVGIWLWLPLLFTWLSPEVSS). Cystine bridges form between cysteine 76–cysteine 87, cysteine 127–cysteine 135, cysteine 137–cysteine 157, cysteine 206–cysteine 220, cysteine 208–cysteine 215, cysteine 278–cysteine 309, cysteine 294–cysteine 304, cysteine 308–cysteine 348, cysteine 324–cysteine 339, cysteine 326–cysteine 336, and cysteine 331–cysteine 332. Serine 212 carries O-palmitoleoyl serine; by PORCN lipidation. Asparagine 295 is a glycosylation site (N-linked (GlcNAc...) asparagine).

This sequence belongs to the Wnt family. Post-translationally, palmitoleoylation is required for efficient binding to frizzled receptors. Depalmitoleoylation leads to Wnt signaling pathway inhibition.

The protein localises to the secreted. It is found in the extracellular space. The protein resides in the extracellular matrix. Its function is as follows. Ligand for members of the frizzled family of seven transmembrane receptors. Probable developmental protein. May be a signaling molecule which affects the development of discrete regions of tissues. Is likely to signal over only few cell diameters. The chain is Protein Wnt-2 (WNT2) from Muntiacus muntjak (Barking deer).